Consider the following 376-residue polypeptide: Actin, macronuclear (376 aa).

This sequence belongs to the actin family.

Its subcellular location is the cytoplasm. It is found in the cytoskeleton. The enzyme catalyses ATP + H2O = ADP + phosphate + H(+). Functionally, actins are highly conserved proteins that are involved in various types of cell motility and are ubiquitously expressed in all eukaryotic cells. The protein is Actin, macronuclear of Tetrahymena thermophila.